Reading from the N-terminus, the 632-residue chain is DNA topoisomerase 4 subunit B (632 aa).

ATP-binding positions include Y5, N42, D69, 110–116 (GLHGVGI), and K334. The Toprim domain occupies 412–525 (TELFLVEGDS…DGHVYVAMPP (114 aa)). Residues E418, D490, and D492 each contribute to the Mg(2+) site.

This sequence belongs to the type II topoisomerase family. ParE type 1 subfamily. As to quaternary structure, heterotetramer composed of ParC and ParE. Mg(2+) is required as a cofactor. Mn(2+) serves as cofactor. It depends on Ca(2+) as a cofactor.

It catalyses the reaction ATP-dependent breakage, passage and rejoining of double-stranded DNA.. Topoisomerase IV is essential for chromosome segregation. It relaxes supercoiled DNA. Performs the decatenation events required during the replication of a circular DNA molecule. The chain is DNA topoisomerase 4 subunit B from Haemophilus influenzae (strain ATCC 51907 / DSM 11121 / KW20 / Rd).